A 445-amino-acid chain; its full sequence is Glutamate--tRNA ligase 2 (445 aa).

A 'HIGH' region motif is present at residues 10–20 (PSPTGMLHVGN). Positions 240–244 (KISKR) match the 'KMSKS' region motif. Residue lysine 243 participates in ATP binding.

This sequence belongs to the class-I aminoacyl-tRNA synthetase family. Glutamate--tRNA ligase type 1 subfamily. Monomer.

Its subcellular location is the cytoplasm. The enzyme catalyses tRNA(Glu) + L-glutamate + ATP = L-glutamyl-tRNA(Glu) + AMP + diphosphate. In terms of biological role, catalyzes the attachment of glutamate to tRNA(Glu) in a two-step reaction: glutamate is first activated by ATP to form Glu-AMP and then transferred to the acceptor end of tRNA(Glu). In Rickettsia canadensis (strain McKiel), this protein is Glutamate--tRNA ligase 2.